The primary structure comprises 181 residues: Inner membrane-spanning protein YciB (181 aa).

A run of 5 helical transmembrane segments spans residues 10–30 (LVIF…GALI), 50–70 (MHLI…ILHD), 72–92 (SFIK…LGVS), 118–138 (VTWY…YVAF), and 148–168 (FKVF…VVYL).

This sequence belongs to the YciB family.

The protein resides in the cell inner membrane. Plays a role in cell envelope biogenesis, maintenance of cell envelope integrity and membrane homeostasis. This is Inner membrane-spanning protein YciB from Shewanella pealeana (strain ATCC 700345 / ANG-SQ1).